The following is a 511-amino-acid chain: Chromosomal replication initiator protein DnaA (511 aa).

The domain I, interacts with DnaA modulators stretch occupies residues 1–90; sequence MSVELWQQCV…RRSSAPRAAP (90 aa). The segment at 91 to 174 is domain II; it reads NAPVSAAMAA…QVEGALKHTS (84 aa). The disordered stretch occupies residues 125–161; it reads TAEPAQASDMAEASSRDSYDSMADSAPAPVAPGRTEQ. Residues 175–391 form a domain III, AAA+ region region; it reads YLNRTFTFET…GALKRVIAHS (217 aa). The ATP site is built by Gly219, Gly221, Lys222, and Thr223. The segment at 392–511 is domain IV, binds dsDNA; sequence HFMGRDITIE…YKNLLRTLTT (120 aa).

It belongs to the DnaA family. In terms of assembly, oligomerizes as a right-handed, spiral filament on DNA at oriC.

The protein localises to the cytoplasm. Functionally, plays an essential role in the initiation and regulation of chromosomal replication. ATP-DnaA binds to the origin of replication (oriC) to initiate formation of the DNA replication initiation complex once per cell cycle. Binds the DnaA box (a 9 base pair repeat at the origin) and separates the double-stranded (ds)DNA. Forms a right-handed helical filament on oriC DNA; dsDNA binds to the exterior of the filament while single-stranded (ss)DNA is stabiized in the filament's interior. The ATP-DnaA-oriC complex binds and stabilizes one strand of the AT-rich DNA unwinding element (DUE), permitting loading of DNA polymerase. After initiation quickly degrades to an ADP-DnaA complex that is not apt for DNA replication. Binds acidic phospholipids. This is Chromosomal replication initiator protein DnaA from Pseudomonas putida (strain W619).